We begin with the raw amino-acid sequence, 244 residues long: 7-cyano-7-deazaguanine synthase (244 aa).

14-24 (FSGGQDSATCV) contributes to the ATP binding site. 4 residues coordinate Zn(2+): Cys-202, Cys-217, Cys-220, and Cys-223.

The protein belongs to the QueC family. Requires Zn(2+) as cofactor.

The catalysed reaction is 7-carboxy-7-deazaguanine + NH4(+) + ATP = 7-cyano-7-deazaguanine + ADP + phosphate + H2O + H(+). It functions in the pathway purine metabolism; 7-cyano-7-deazaguanine biosynthesis. Functionally, catalyzes the ATP-dependent conversion of 7-carboxy-7-deazaguanine (CDG) to 7-cyano-7-deazaguanine (preQ(0)). The sequence is that of 7-cyano-7-deazaguanine synthase from Burkholderia multivorans (strain ATCC 17616 / 249).